The sequence spans 264 residues: Claudin-18 (264 aa).

At 1-6 (MATTTC) the chain is on the cytoplasmic side. A helical transmembrane segment spans residues 7 to 27 (QVVGLLLSLLGLAGCIAATGM). Topologically, residues 28-80 (DMWSTQDLYDNPVTAVFQYEGLWRSCVQQSSGFTECRPYFTILGLPAMLQAVR) are extracellular. The helical transmembrane segment at 81-101 (ALMIVGIVLGVIGILVSIFAL) threads the bilayer. Residues 102–122 (KCIRIGSMDDSAKAKMTLTSG) are Cytoplasmic-facing. Residues 123–143 (ILFIISGICAIIGVSVFANML) traverse the membrane as a helical segment. Topologically, residues 144–176 (VTNFWMSTANMYSGMGGMGGMVQTVQTRYTFGA) are extracellular. The chain crosses the membrane as a helical span at residues 177-197 (ALFVGWVAGGLTLIGGVMMCI). Topologically, residues 198–264 (ACRGLTPDDS…QSHPTKYDYV (67 aa)) are cytoplasmic. Residues 198–264 (ACRGLTPDDS…QSHPTKYDYV (67 aa)) are required for role in regulation of RANKL-induced osteoclast differentiation. Residue S217 is modified to Phosphoserine. Residues 241–264 (KKIYDGGARTEDDEQSHPTKYDYV) form a disordered region. Positions 242 to 264 (KIYDGGARTEDDEQSHPTKYDYV) are enriched in basic and acidic residues.

The protein belongs to the claudin family. Interacts with TJP2/ZO-2. Interacts with TJP1/ZO-1. Interacts with YAP1 (phosphorylated); the interaction sequesters YAP1 away from the nucleus and thereby restricts transcription of YAP1 target genes. In terms of assembly, interacts with CLDN19. Expressed in the lung (at protein level). As to expression, expressed in lung. Expressed in the stomach. In terms of tissue distribution, expressed in lung. Expressed in stomach. Expressed in bone. As to expression, expressed in stomach.

Its subcellular location is the cell junction. The protein resides in the tight junction. The protein localises to the cell membrane. It is found in the lateral cell membrane. In terms of biological role, involved in alveolar fluid homeostasis via regulation of alveolar epithelial tight junction composition and therefore ion transport and solute permeability, potentially via downstream regulation of the actin cytoskeleton organization and beta-2-adrenergic signaling. Required for lung alveolarization and maintenance of the paracellular alveolar epithelial barrier. Acts to maintain epithelial progenitor cell proliferation and organ size, via regulation of YAP1 localization away from the nucleus and thereby restriction of YAP1 target gene transcription. Acts as a negative regulator of RANKL-induced osteoclast differentiation, potentially via relocation of TJP2/ZO-2 away from the nucleus, subsequently involved in bone resorption in response to calcium deficiency. Mediates the osteoprotective effects of estrogen, potentially via acting downstream of estrogen signaling independently of RANKL signaling pathways. Involved in the maintenance of homeostasis of the alveolar microenvironment via regulation of pH and subsequent T-cell activation in the alveolar space, is therefore indirectly involved in limiting C.neoformans infection. Functionally, required for the formation of the gastric paracellular barrier via its role in tight junction formation, thereby involved in the response to gastric acidification. The sequence is that of Claudin-18 (Cldn18) from Mus musculus (Mouse).